A 388-amino-acid chain; its full sequence is Pepsin F (388 aa).

The N-terminal stretch at 1-15 is a signal peptide; the sequence is MKWLGLLGLVALSEC. Residues 16 to 58 constitute a propeptide, activation peptide; the sequence is LVTIPLMKVKSMRENLRENDILLDYLEKHPYRPTYKLLSGQQD. Residues 74-385 enclose the Peptidase A1 domain; sequence YIGIISIGTP…DRANNRIGLA (312 aa). The active site involves D92. Cystine bridges form between C105/C110 and C266/C270. D275 is a catalytic residue. C309 and C343 are disulfide-bonded.

It belongs to the peptidase A1 family.

Its subcellular location is the secreted. The enzyme catalyses Preferential cleavage: hydrophobic, preferably aromatic, residues in P1 and P1' positions. Cleaves 1-Phe-|-Val-2, 4-Gln-|-His-5, 13-Glu-|-Ala-14, 14-Ala-|-Leu-15, 15-Leu-|-Tyr-16, 16-Tyr-|-Leu-17, 23-Gly-|-Phe-24, 24-Phe-|-Phe-25 and 25-Phe-|-Tyr-26 bonds in the B chain of insulin.. Shows particularly broad specificity; although bonds involving phenylalanine and leucine are preferred, many others are also cleaved to some extent. The polypeptide is Pepsin F (Oryctolagus cuniculus (Rabbit)).